A 310-amino-acid chain; its full sequence is MTNIVHKLTNSDIQQLMSKIPFETSQLSQGMKAKTKYKGTSISIYNSNKVMFQGKDAERIAAQLLPNVTKSQPSSKKASTTKQTISYNQFQCIGSDEAGSGDYFGPLTVCAAYVSHKNVQILKALGVDDSKKLTDTKIVELAEQLVTFIPHSLLVMNNEKYNEKQKAGWSQVKMKAVLHNEAIKNVTQKIDTTELDYIVIDQFAEAGVYKRYALSDLPFSNKTKFETKGESKSIAIAAASIISRYAFVKHMDRLTQSVKTDIPKGASNKVDLTAAKIIERKGIAYLDSISKKHFANRKKAENLVQKKYND.

The 217-residue stretch at 90-306 (FQCIGSDEAG…RKKAENLVQK (217 aa)) folds into the RNase H type-2 domain. Asp96, Glu97, and Asp201 together coordinate a divalent metal cation.

The protein belongs to the RNase HII family. RnhC subfamily. Mn(2+) serves as cofactor. It depends on Mg(2+) as a cofactor.

The protein resides in the cytoplasm. It catalyses the reaction Endonucleolytic cleavage to 5'-phosphomonoester.. Its function is as follows. Endonuclease that specifically degrades the RNA of RNA-DNA hybrids. In Staphylococcus saprophyticus subsp. saprophyticus (strain ATCC 15305 / DSM 20229 / NCIMB 8711 / NCTC 7292 / S-41), this protein is Ribonuclease HIII.